A 464-amino-acid chain; its full sequence is tRNA modification GTPase MnmE (464 aa).

3 residues coordinate (6S)-5-formyl-5,6,7,8-tetrahydrofolate: Arg-26, Glu-92, and Arg-131. A TrmE-type G domain is found at 227–385 (GIKVAILGRV…LISALKDYVS (159 aa)). Asn-237 lines the K(+) pocket. GTP contacts are provided by residues 237–242 (NAGKSS), 256–262 (SNIAGTT), and 281–284 (DTAG). Ser-241 lines the Mg(2+) pocket. K(+) is bound by residues Ser-256, Ile-258, and Thr-261. Thr-262 is a binding site for Mg(2+). Lys-464 is a binding site for (6S)-5-formyl-5,6,7,8-tetrahydrofolate.

This sequence belongs to the TRAFAC class TrmE-Era-EngA-EngB-Septin-like GTPase superfamily. TrmE GTPase family. As to quaternary structure, homodimer. Heterotetramer of two MnmE and two MnmG subunits. K(+) is required as a cofactor.

It is found in the cytoplasm. Exhibits a very high intrinsic GTPase hydrolysis rate. Involved in the addition of a carboxymethylaminomethyl (cmnm) group at the wobble position (U34) of certain tRNAs, forming tRNA-cmnm(5)s(2)U34. The sequence is that of tRNA modification GTPase MnmE from Brachyspira hyodysenteriae (strain ATCC 49526 / WA1).